Here is a 501-residue protein sequence, read N- to C-terminus: ATP synthase subunit alpha (501 aa).

169–176 lines the ATP pocket; the sequence is GDRQTGKT.

The protein belongs to the ATPase alpha/beta chains family. In terms of assembly, F-type ATPases have 2 components, CF(1) - the catalytic core - and CF(0) - the membrane proton channel. CF(1) has five subunits: alpha(3), beta(3), gamma(1), delta(1), epsilon(1). CF(0) has three main subunits: a(1), b(2) and c(9-12). The alpha and beta chains form an alternating ring which encloses part of the gamma chain. CF(1) is attached to CF(0) by a central stalk formed by the gamma and epsilon chains, while a peripheral stalk is formed by the delta and b chains.

It localises to the cell membrane. It catalyses the reaction ATP + H2O + 4 H(+)(in) = ADP + phosphate + 5 H(+)(out). Its function is as follows. Produces ATP from ADP in the presence of a proton gradient across the membrane. The alpha chain is a regulatory subunit. The sequence is that of ATP synthase subunit alpha from Desulforamulus reducens (strain ATCC BAA-1160 / DSM 100696 / MI-1) (Desulfotomaculum reducens).